A 247-amino-acid polypeptide reads, in one-letter code: ATP synthase subunit a (247 aa).

Transmembrane regions (helical) follow at residues 26–46 (ITNN…LFYV), 85–105 (YFPL…IGLL), 115–135 (IIFT…INFF), 141–161 (FFNL…LVVI), 178–198 (FANM…IFNV), and 205–225 (ISFL…CIAI).

This sequence belongs to the ATPase A chain family. In terms of assembly, F-type ATPases have 2 components, CF(1) - the catalytic core - and CF(0) - the membrane proton channel. CF(1) has five subunits: alpha(3), beta(3), gamma(1), delta(1), epsilon(1). CF(0) has three main subunits: a, b and c.

Its subcellular location is the mitochondrion inner membrane. Mitochondrial membrane ATP synthase (F(1)F(0) ATP synthase or Complex V) produces ATP from ADP in the presence of a proton gradient across the membrane which is generated by electron transport complexes of the respiratory chain. F-type ATPases consist of two structural domains, F(1) - containing the extramembraneous catalytic core and F(0) - containing the membrane proton channel, linked together by a central stalk and a peripheral stalk. During catalysis, ATP synthesis in the catalytic domain of F(1) is coupled via a rotary mechanism of the central stalk subunits to proton translocation. Key component of the proton channel; it may play a direct role in the translocation of protons across the membrane. The sequence is that of ATP synthase subunit a (ATP6) from Acanthamoeba castellanii (Amoeba).